A 267-amino-acid chain; its full sequence is 4-hydroxy-tetrahydrodipicolinate reductase (267 aa).

NAD(+) is bound by residues 8–13 (GAAGRM) and Glu34. Arg35 is an NADP(+) binding site. NAD(+) contacts are provided by residues 98 to 100 (GST) and 122 to 125 (APNM). His155 serves as the catalytic Proton donor/acceptor. A (S)-2,3,4,5-tetrahydrodipicolinate-binding site is contributed by His156. The active-site Proton donor is the Lys159. 165 to 166 (GT) is a binding site for (S)-2,3,4,5-tetrahydrodipicolinate.

This sequence belongs to the DapB family.

Its subcellular location is the cytoplasm. It catalyses the reaction (S)-2,3,4,5-tetrahydrodipicolinate + NAD(+) + H2O = (2S,4S)-4-hydroxy-2,3,4,5-tetrahydrodipicolinate + NADH + H(+). The catalysed reaction is (S)-2,3,4,5-tetrahydrodipicolinate + NADP(+) + H2O = (2S,4S)-4-hydroxy-2,3,4,5-tetrahydrodipicolinate + NADPH + H(+). It functions in the pathway amino-acid biosynthesis; L-lysine biosynthesis via DAP pathway; (S)-tetrahydrodipicolinate from L-aspartate: step 4/4. Catalyzes the conversion of 4-hydroxy-tetrahydrodipicolinate (HTPA) to tetrahydrodipicolinate. The sequence is that of 4-hydroxy-tetrahydrodipicolinate reductase from Geobacter sp. (strain M21).